The following is a 1035-amino-acid chain: Alpha-mannosidase B (1035 aa).

The signal sequence occupies residues 1 to 20 (MGKVLILFLFVLLLITFINC). 2 N-linked (GlcNAc...) asparagine glycosylation sites follow: Asn19 and Asn30. Residues His47 and Asp49 each contribute to the Zn(2+) site. Asn63 carries N-linked (GlcNAc...) asparagine glycosylation. Position 161 (Asp161) interacts with Zn(2+). Asp161 serves as the catalytic Nucleophile. N-linked (GlcNAc...) asparagine glycans are attached at residues Asn245, Asn250, Asn270, Asn309, Asn327, and Asn438. His446 serves as a coordination point for Zn(2+). Residues Asn487, Asn497, Asn503, Asn710, Asn719, Asn735, Asn792, Asn852, Asn863, Asn880, Asn962, and Asn993 are each glycosylated (N-linked (GlcNAc...) asparagine).

The protein belongs to the glycosyl hydrolase 38 family. Zn(2+) serves as cofactor.

The protein resides in the secreted. It catalyses the reaction Hydrolysis of terminal, non-reducing alpha-D-mannose residues in alpha-D-mannosides.. The chain is Alpha-mannosidase B (manB) from Dictyostelium discoideum (Social amoeba).